Consider the following 637-residue polypeptide: Threonine--tRNA ligase (637 aa).

The region spanning 1 to 61 (MPNVKLPDGN…KEDCSLIIVT (61 aa)) is the TGS domain. A catalytic region spans residues 242–533 (DHRKLGKALD…LIEHYAGKLP (292 aa)). Residues cysteine 333, histidine 384, and histidine 510 each contribute to the Zn(2+) site.

This sequence belongs to the class-II aminoacyl-tRNA synthetase family. In terms of assembly, homodimer. Zn(2+) is required as a cofactor.

The protein localises to the cytoplasm. The catalysed reaction is tRNA(Thr) + L-threonine + ATP = L-threonyl-tRNA(Thr) + AMP + diphosphate + H(+). Its function is as follows. Catalyzes the attachment of threonine to tRNA(Thr) in a two-step reaction: L-threonine is first activated by ATP to form Thr-AMP and then transferred to the acceptor end of tRNA(Thr). Also edits incorrectly charged L-seryl-tRNA(Thr). This is Threonine--tRNA ligase from Legionella pneumophila (strain Corby).